A 405-amino-acid polypeptide reads, in one-letter code: Nuclear hormone receptor family member nhr-199 (405 aa).

Residues Ile-20–Gln-111 constitute a DNA-binding region (nuclear receptor). 2 NR C4-type zinc fingers span residues Cys-23–Cys-44 and Cys-60–Cys-94. Positions Arg-126 to Lys-376 constitute an NR LBD domain.

It belongs to the nuclear hormone receptor family.

It is found in the nucleus. Functionally, orphan nuclear receptor. In Caenorhabditis elegans, this protein is Nuclear hormone receptor family member nhr-199 (nhr-199).